The primary structure comprises 185 residues: uncharacterized protein (185 aa).

An N-acetylmethionine modification is found at M1. Basic and acidic residues-rich tracts occupy residues 1–18 (MDAF…QDKQ), 26–47 (TPSD…TTEE), and 59–71 (SNED…PVLE). Disordered stretches follow at residues 1 to 71 (MDAF…PVLE) and 155 to 185 (DHDR…DGLL). Positions 170–185 (LPEELETDQDFLDGLL) are enriched in acidic residues.

This is an uncharacterized protein from Saccharomyces cerevisiae (strain ATCC 204508 / S288c) (Baker's yeast).